The sequence spans 480 residues: Nuclear receptor subfamily 6 group A member 1 (480 aa).

The segment at 1–32 (MERDEPPPSGGGGGGGSAGFLEPPAALPPPPR) is disordered. A DNA-binding region (nuclear receptor) is located at residues 57 to 132 (QRTCLICGDR…MGMNRKAIRE (76 aa)). Zn(2+)-binding residues include Cys60, Cys63, Cys77, Cys80, Cys96, Cys102, Cys112, and Cys115. 2 NR C4-type zinc fingers span residues 60–80 (CLICGDRATGLHYGIISCEGC) and 96–120 (CSRDKNCVMSRKQRNRCQYCRLLKC). Disordered stretches follow at residues 131 to 150 (REDGMPGGRNKSIGPVQISE) and 162 to 199 (FEEEANHWSNHGDSDHSSPGNRASESNQPSPGSTLSSS). The segment covering 165-177 (EANHWSNHGDSDH) has biased composition (basic and acidic residues). Positions 172–253 (HGDSDHSSPG…RSLDPQSYSL (82 aa)) are sufficient for interaction with UIMC1. Residues 187–199 (SNQPSPGSTLSSS) show a composition bias toward low complexity. Residues 249–480 (QSYSLIHQLL…HSCKTSVGKE (232 aa)) enclose the NR LBD domain.

This sequence belongs to the nuclear hormone receptor family. NR6 subfamily. Homodimer. Interacts with UIMC1. Shows highest expression in the germ cells of the adult testis.

It is found in the nucleus. Its function is as follows. Orphan nuclear receptor that binds to a response element containing the sequence 5'-TCAAGGTCA-3'. Acts as a regulator of embryonic stem cell pluripotency by mediating repression of POU5F1/OCT4: binds to the DR0 element within the POU5F1/OCT4 promoter and inhibits POU5F1/OCT4 expression during embryonic stem cell differentiation. Involved in the regulation of gene expression in germ cell development during gametogenesis. The chain is Nuclear receptor subfamily 6 group A member 1 (NR6A1) from Homo sapiens (Human).